Here is an 82-residue protein sequence, read N- to C-terminus: Modifier of protein aggregation 4 (82 aa).

Over residues 1-23 (MTRGNQRDLAREKNQKKLADQKK) the composition is skewed to basic and acidic residues. Disordered stretches follow at residues 1 to 41 (MTRG…MDAR) and 63 to 82 (EAAA…PLKM).

It belongs to the SERF family.

Its subcellular location is the cytoplasm. It is found in the cytosol. The protein resides in the nucleus. In terms of biological role, positive regulator of protein aggregation and age-related proteotoxicity. Induces conformational changes in aggregation-prone proteins, driving them into compact formations preceding the formation of aggregates. This Caenorhabditis elegans protein is Modifier of protein aggregation 4.